Consider the following 425-residue polypeptide: Serine--tRNA ligase (425 aa).

T233–E235 is an L-serine binding site. Residue R264 to E266 participates in ATP binding. E287 is a binding site for L-serine. Residue E351–S354 participates in ATP binding. Residue S385 participates in L-serine binding.

Belongs to the class-II aminoacyl-tRNA synthetase family. Type-1 seryl-tRNA synthetase subfamily. As to quaternary structure, homodimer. The tRNA molecule binds across the dimer.

It localises to the cytoplasm. The enzyme catalyses tRNA(Ser) + L-serine + ATP = L-seryl-tRNA(Ser) + AMP + diphosphate + H(+). The catalysed reaction is tRNA(Sec) + L-serine + ATP = L-seryl-tRNA(Sec) + AMP + diphosphate + H(+). It functions in the pathway aminoacyl-tRNA biosynthesis; selenocysteinyl-tRNA(Sec) biosynthesis; L-seryl-tRNA(Sec) from L-serine and tRNA(Sec): step 1/1. Its function is as follows. Catalyzes the attachment of serine to tRNA(Ser). Is also able to aminoacylate tRNA(Sec) with serine, to form the misacylated tRNA L-seryl-tRNA(Sec), which will be further converted into selenocysteinyl-tRNA(Sec). The sequence is that of Serine--tRNA ligase from Parasynechococcus marenigrum (strain WH8102).